The sequence spans 126 residues: Cysteine-rich tail protein 1 (126 aa).

The tract at residues 1–89 is disordered; that stretch reads MDPHETLVKN…PAGLAYAGPP (89 aa).

It belongs to the CYSRT1 family. As to quaternary structure, interacts with components of the late cornfied envelope (LCE).

The protein resides in the cornified envelope. Its function is as follows. Component of the stratum corneum that may contribute to epidermal antimicrobial host defenses. This chain is Cysteine-rich tail protein 1 (CYSRT1), found in Bos taurus (Bovine).